Consider the following 913-residue polypeptide: Glutamate receptor ionotropic, kainate 2 (913 aa).

Residues 1–566 are Extracellular-facing; that stretch reads MCAGTMKIIS…VFSFLNPLSP (566 aa). N-linked (GlcNAc...) asparagine glycosylation is found at N72, N78, N280, N383, N417, N428, and N435. C101 and C352 are oxidised to a cystine. Residues P521, A523, and R528 each contribute to the L-glutamate site. N551 carries an N-linked (GlcNAc...) asparagine glycan. The chain crosses the membrane as a helical span at residues 567-587; that stretch reads DIWMYILLAYLGVSCVLFVIA. Residues 588–643 lie on the Cytoplasmic side of the membrane; the sequence is RFSPYEWYNPHPCNPDSDVVENNFTLLNSFWFGVGALMQQGSELMPKALSTRIVGG. Residues 644 to 664 traverse the membrane as a helical segment; the sequence is IWWFFTLIIISSYTANLAAFL. The Extracellular segment spans residues 665–824; the sequence is TVERMESPID…KEASALGVQN (160 aa). The L-glutamate site is built by A694, T695, and E743. C755 and C809 are disulfide-bonded. A glycan (N-linked (GlcNAc...) asparagine) is linked at N756. Residues 825-845 traverse the membrane as a helical segment; the sequence is IGGIFIVLAAGLVLSVFVAVG. Topologically, residues 846–913 are cytoplasmic; that stretch reads EFLYKSKKNA…RRLPGKETMA (68 aa).

The protein belongs to the glutamate-gated ion channel (TC 1.A.10.1) family. GRIK2 subfamily. In terms of assembly, homotetramer and heterotetramer with GRIK5. Tetramers may be formed by the dimerization of dimers.

Its subcellular location is the cell membrane. The protein resides in the postsynaptic cell membrane. The catalysed reaction is Ca(2+)(in) = Ca(2+)(out). The enzyme catalyses Na(+)(in) = Na(+)(out). Its activity is regulated as follows. Cold receptor activity activated by temperatures between 10-19 degrees Celsius. Its function is as follows. Ionotropic glutamate receptor that functions as a cation-permeable ligand-gated ion channel, gated by L-glutamate and the glutamatergic agonist kainic acid. L-glutamate acts as an excitatory neurotransmitter at many synapses in the central nervous system. Binding of the excitatory neurotransmitter L-glutamate induces a conformation change, leading to the opening of the cation channel, and thereby converts the chemical signal to an electrical impulse. The receptor then desensitizes rapidly and enters a transient inactive state, characterized by the presence of bound agonist. Functionally, independent of its ionotropic glutamate receptor activity, acts as a thermoreceptor conferring sensitivity to cold temperatures. Functions in dorsal root ganglion neurons. This is Glutamate receptor ionotropic, kainate 2 (grik2) from Xenopus laevis (African clawed frog).